A 107-amino-acid polypeptide reads, in one-letter code: MSSHPTKITFFEFLTPLITSGQKTITIRDESESHYVPNTEVEVFTLETDRKVCDIKILSVEPLNFDEINEFHAEQEAIELPKLKQLIREIYPNIDKLFVIEYELIKK.

One can recognise an ASCH domain in the interval 9–105; the sequence is TFFEFLTPLI…KLFVIEYELI (97 aa). The active-site Proton acceptor is K23. Catalysis depends on T26, which acts as the Nucleophile. E76 acts as the Proton donor in catalysis.

It belongs to the N(4)-acetylcytidine amidohydrolase family.

The enzyme catalyses N(4)-acetylcytidine + H2O = cytidine + acetate + H(+). It catalyses the reaction N(4)-acetyl-2'-deoxycytidine + H2O = 2'-deoxycytidine + acetate + H(+). The catalysed reaction is N(4)-acetylcytosine + H2O = cytosine + acetate + H(+). Catalyzes the hydrolysis of N(4)-acetylcytidine (ac4C). The polypeptide is N(4)-acetylcytidine amidohydrolase (Vibrio parahaemolyticus serotype O3:K6 (strain RIMD 2210633)).